Reading from the N-terminus, the 284-residue chain is 4-diphosphocytidyl-2-C-methyl-D-erythritol kinase (284 aa).

K14 is an active-site residue. 98–108 (PMGGGLGGGSS) is an ATP binding site. D140 is a catalytic residue.

This sequence belongs to the GHMP kinase family. IspE subfamily.

The catalysed reaction is 4-CDP-2-C-methyl-D-erythritol + ATP = 4-CDP-2-C-methyl-D-erythritol 2-phosphate + ADP + H(+). It functions in the pathway isoprenoid biosynthesis; isopentenyl diphosphate biosynthesis via DXP pathway; isopentenyl diphosphate from 1-deoxy-D-xylulose 5-phosphate: step 3/6. Catalyzes the phosphorylation of the position 2 hydroxy group of 4-diphosphocytidyl-2C-methyl-D-erythritol. This Shewanella baltica (strain OS195) protein is 4-diphosphocytidyl-2-C-methyl-D-erythritol kinase.